The primary structure comprises 82 residues: Protein WFDC11 (82 aa).

Residues 1-21 form the signal peptide; that stretch reads MKPSWFPCLVFLCMLLLSALG.

Its subcellular location is the secreted. The sequence is that of Protein WFDC11 (Wfdc11) from Mus musculus (Mouse).